We begin with the raw amino-acid sequence, 148 residues long: Multiprotein-bridging factor 1 (148 aa).

Positions 1 to 97 (MSDWDTVTKI…AKGWAQKDLS (97 aa)) are disordered. The HTH cro/C1-type domain occupies 82–136 (IQKGRQAKGWAQKDLSQRINEKPQVVNDYESGRAIPNQQVLSKMERALGIKLRGQ). Residues 93-112 (QKDLSQRINEKPQVVNDYES) constitute a DNA-binding region (H-T-H motif).

Belongs to the MBF1 family.

Its function is as follows. Transcriptional coactivator that stimulates GCN4-dependent transcriptional activity by bridging the DNA-binding region of GCN4 and TBP (SPT15), thereby recruiting TBP to GCN4-bound promoters. Involved in induction of the ribosome quality control (RQC) pathway; a pathway that degrades nascent peptide chains during problematic translation. Required to prevent stalled ribosomes from frameshifting. The chain is Multiprotein-bridging factor 1 (mbf1) from Schizosaccharomyces pombe (strain 972 / ATCC 24843) (Fission yeast).